Here is a 576-residue protein sequence, read N- to C-terminus: V-type ATP synthase alpha chain (576 aa).

238-245 provides a ligand contact to ATP; sequence GPFGAGKT.

Belongs to the ATPase alpha/beta chains family.

It catalyses the reaction ATP + H2O + 4 H(+)(in) = ADP + phosphate + 5 H(+)(out). Produces ATP from ADP in the presence of a proton gradient across the membrane. The V-type alpha chain is a catalytic subunit. The chain is V-type ATP synthase alpha chain from Borrelia turicatae (strain 91E135).